An 808-amino-acid polypeptide reads, in one-letter code: MLVSRFASRFRKDSSTEMVRTNLAHRKSLSQKENRHRVYERNRHFGLKDVNIPLEGRELGNIHETSQDLSPEKASSKTRSVKMVLSDQRKQLLQKYKEEKQLQKLKEQREKAKRGVFKVGLYRPAAPGFLVTDQRGAKAEPEKAFPHTGRITRSKTKEYMEQTKIGSRNVPKATQSDQRQTSEKQPLDRERKVMQPVLFTSGKGTESAATQRAKLMARTVSSTTRKPVTRATNEKGSERMRPSGGRPAKKPEGKPDKVIPSKVERDEKHLDSQTRETSEMGPLGVFREVESLPATAPAQGKERKSFAPKHCVFQPPCGLKSYQVAPLSPRSANAFLTPNCDWNQLRPEVFSTTTQDKANEILVQQGLESLTDRSKEHVLNQKGASTSDSNHASVKGVPCSEGSEGQTSQPPHDVPYFRKILQSETDRLTSHCLEWEGKLDLDISDEAKGLIRTTVGQTRLLIKERFRQFEGLVDNCEYKRGEKETTCTDLDGFWDMVSFQVDDVNQKFNNLIKLEASGWKDSNNPSKKVLRKKIVPGRTSKAKQDDDGRAAARSRLAAIKNAMKGRPQQEVQAHAAAPETTKEVDKIVFDAGFFRIESPVKSFSVLSSERRSQRFGTPLSASKVVPEGRAAGDLLRQKMPLKKPDPQSSKSEHVDRTFSDGLESRCHVEDTPCPGEQDSSDIEHDVNKINVKMDCFSVETNLPLPAGDANTNQKEAISAVEGASTAVTSQDLLMSNPETNTSSQSNTSQEEAEASQSVLLHKSLTSECHLLEPPGLSCTSPCTREETRQPDRSRQFSFGGDLILFSPL.

2 positions are modified to phosphoserine: serine 66 and serine 70. The stretch at 88–119 (QRKQLLQKYKEEKQLQKLKEQREKAKRGVFKV) forms a coiled coil. Residues 134-282 (QRGAKAEPEK…QTRETSEMGP (149 aa)) form a disordered region. Basic and acidic residues-rich tracts occupy residues 135-145 (RGAKAEPEKAF) and 180-193 (QTSEKQPLDRERKV). Position 201 is a phosphoserine (serine 201). Basic and acidic residues-rich tracts occupy residues 232–241 (TNEKGSERMR) and 249–278 (KKPEGKPDKVIPSKVERDEKHLDSQTRETS). Serine 328 carries the post-translational modification Phosphoserine. Phosphothreonine is present on residues threonine 337 and threonine 386. Positions 377–413 (HVLNQKGASTSDSNHASVKGVPCSEGSEGQTSQPPHD) are disordered. Residues 382–392 (KGASTSDSNHA) are compositionally biased toward polar residues. Serine 598 bears the Phosphoserine mark. A Phosphoserine; by AURKA modification is found at serine 607. Serine 612 is modified (phosphoserine). At threonine 617 the chain carries Phosphothreonine. Serine 620 carries the post-translational modification Phosphoserine. Positions 629-654 (RAAGDLLRQKMPLKKPDPQSSKSEHV) are disordered. Positions 642–654 (KKPDPQSSKSEHV) are enriched in basic and acidic residues. Position 728 is a phosphothreonine (threonine 728). The disordered stretch occupies residues 735–757 (SNPETNTSSQSNTSQEEAEASQS). Serine 743 is subject to Phosphoserine. Serine 797 is subject to Phosphoserine; by AURKA. Phosphoserine is present on serine 806.

The protein belongs to the SAPAP family. Interacts with CDC2. Interacts with the C-terminal proline-rich region of FBXO7. Recruited by FBXO7 to a SCF (SKP1-CUL1-F-box) protein complex in a CDC2/Cyclin B-phosphorylation dependent manner. Interacts with CDH1. Post-translationally, ubiquitinated, leading to its degradation. Decreased phosphorylation levels are associated with the differentiation of intestinal epithelial cells. Expressed at low levels in normal resting liver. Up-regulated in regenerating liver after partial hepatectomy.

It localises to the nucleus. Its subcellular location is the cytoplasm. The protein resides in the cytoskeleton. It is found in the spindle. Functionally, potential cell cycle regulator that may play a role in carcinogenesis of cancer cells. Mitotic phosphoprotein regulated by the ubiquitin-proteasome pathway. Key regulator of adherens junction integrity and differentiation that may be involved in CDH1-mediated adhesion and signaling in epithelial cells. This chain is Disks large-associated protein 5 (Dlgap5), found in Mus musculus (Mouse).